A 313-amino-acid polypeptide reads, in one-letter code: Olfactory receptor 10K1 (313 aa).

The Extracellular portion of the chain corresponds to 1 to 25 (MEQVNKTVVREFVVLGFSSLARLQQ). The N-linked (GlcNAc...) asparagine glycan is linked to asparagine 5. A helical membrane pass occupies residues 26 to 46 (LLFVIFLLLYLFTLGTNAIII). Residues 47–54 (STIVLDRA) are Cytoplasmic-facing. Residues 55-75 (LHTPMYFFLAILSCSEICYTF) traverse the membrane as a helical segment. At 76–99 (VIVPKMLVDLLSQKKTISFLGCAI) the chain is on the extracellular side. Residues 100-120 (QMFSFLFFGSSHSFLLAAMGY) form a helical membrane-spanning segment. The Cytoplasmic portion of the chain corresponds to 121 to 139 (DRYMAICNPLRYSVLMGHG). A helical transmembrane segment spans residues 140 to 160 (VCMGLMAAACACGFTVSLVTT). Residues 161–197 (SLVFHLPFHSSNQLHHFFCDISPVLKLASQHSGFSQL) lie on the Extracellular side of the membrane. A helical membrane pass occupies residues 198 to 217 (VIFMLGVFALVIPLLLILVS). Over 218-237 (YIRIISAILKIPSSVGRYKT) the chain is Cytoplasmic. Residues 238–258 (FSTCASHLIVVTVHYSCASFI) form a helical membrane-spanning segment. The Extracellular portion of the chain corresponds to 259–271 (YLRPKTNYTSSQD). N-linked (GlcNAc...) asparagine glycosylation is present at asparagine 265. Residues 272-292 (TLISVSYTILTPLFNPMIYSL) traverse the membrane as a helical segment. The Cytoplasmic portion of the chain corresponds to 293 to 313 (RNKEFKSALRRTIGQTFYPLS).

It belongs to the G-protein coupled receptor 1 family.

Its subcellular location is the cell membrane. In terms of biological role, odorant receptor. This Homo sapiens (Human) protein is Olfactory receptor 10K1 (OR10K1).